Here is a 431-residue protein sequence, read N- to C-terminus: Evolutionarily conserved signaling intermediate in Toll pathway, mitochondrial (431 aa).

Residues 1 to 48 (MSWVQATLLARGLCRAWGGTCGAALTGTSISQVPRRLPRGLHCSAAAH) constitute a mitochondrion transit peptide. Lysine 372 is covalently cross-linked (Glycyl lysine isopeptide (Lys-Gly) (interchain with G-Cter in ubiquitin)). Positions 400-431 (LQTSSAGLEEPPLPEDHQEEDDNLQRQQQGQS) are disordered.

This sequence belongs to the ECSIT family. Interacts with MAP3K1, SMAD4 and TRAF6. Interacts with SMAD1 only after BMP4-treatment. Part of the mitochondrial complex I assembly/MCIA complex that comprises at least the core subunits TMEM126B, NDUFAF1, ECSIT and ACAD9 and complement subunits such as COA1 and TMEM186. Interacts with NDUFAF1. Interacts with ACAD9. Interacts with TRIM59. Interacts with TMEM70 and TMEM242. Interacts (when ubiquitinated) with NF-kappa-B subunits RELA and NFKB1. Interacts with RIGI, IFIT1 and MAVS; these interactions promote RLR-mediated type I IFN induction. Interacts with SQSTM1; this interaction inhibits TLR4 signaling via functional regulation of the TRAF6-ECSIT complex. Interacts with cereblon/CRBN; this interaction inhibits the ubiquitination of ECSIT. In terms of processing, ubiquitinated on Lys-372; leading to translocation in the nucleus together with RELA and NFKB1 and expression of NF-kappa-B-dependent genes.

The protein localises to the cytoplasm. Its subcellular location is the nucleus. It is found in the mitochondrion. Adapter protein that plays a role in different signaling pathways including TLRs and IL-1 pathways or innate antiviral induction signaling. Plays a role in the activation of NF-kappa-B by forming a signal complex with TRAF6 and TAK1/MAP3K7 to activate TAK1/MAP3K7 leading to activation of IKKs. Once ubiquitinated, interacts with the dissociated RELA and NFKB1 proteins and translocates to the nucleus where it induces NF-kappa-B-dependent gene expression. Plays a role in innate antiviral immune response by bridging the pattern recognition receptors RIGI and MDA5/IFIT1 to the MAVS complex at the mitochondrion. Promotes proteolytic activation of MAP3K1. Involved in the BMP signaling pathway. Required for normal embryonic development. Its function is as follows. As part of the MCIA complex, involved in the assembly of the mitochondrial complex I. The protein is Evolutionarily conserved signaling intermediate in Toll pathway, mitochondrial of Homo sapiens (Human).